Here is a 319-residue protein sequence, read N- to C-terminus: FAD-dependent oxidoreductase FVFD30 (319 aa).

Arginine 6, aspartate 18, and lysine 25 together coordinate FAD. Lysine 129 and glycine 188 together coordinate NAD(+). Lysine 129 and glycine 188 together coordinate NADP(+). Residues aspartate 228 and tyrosine 265 each contribute to the FAD site. Position 228 (aspartate 228) interacts with 6-hydroxy-FAD. Residue tyrosine 265 coordinates NAD(+). Tyrosine 265 contributes to the NADP(+) binding site. Residues 281–301 (GVGYFGVWWGIVIGGWLASLL) traverse the membrane as a helical segment.

This sequence belongs to the FAD-dependent oxidoreductase family.

Its subcellular location is the membrane. Probable FAD-dependent oxidoreductase that plays a role in the regulation of fruiting body development. This chain is FAD-dependent oxidoreductase FVFD30, found in Flammulina velutipes (Agaricus velutipes).